The following is a 430-amino-acid chain: Gamma-glutamyl phosphate reductase (430 aa).

It belongs to the gamma-glutamyl phosphate reductase family.

It localises to the cytoplasm. The enzyme catalyses L-glutamate 5-semialdehyde + phosphate + NADP(+) = L-glutamyl 5-phosphate + NADPH + H(+). The protein operates within amino-acid biosynthesis; L-proline biosynthesis; L-glutamate 5-semialdehyde from L-glutamate: step 2/2. Its function is as follows. Catalyzes the NADPH-dependent reduction of L-glutamate 5-phosphate into L-glutamate 5-semialdehyde and phosphate. The product spontaneously undergoes cyclization to form 1-pyrroline-5-carboxylate. The sequence is that of Gamma-glutamyl phosphate reductase from Rhodopseudomonas palustris (strain ATCC BAA-98 / CGA009).